A 424-amino-acid chain; its full sequence is Glutamate-1-semialdehyde 2,1-aminomutase (424 aa).

K266 carries the post-translational modification N6-(pyridoxal phosphate)lysine.

Belongs to the class-III pyridoxal-phosphate-dependent aminotransferase family. HemL subfamily. As to quaternary structure, homodimer. Requires pyridoxal 5'-phosphate as cofactor.

It localises to the cytoplasm. It catalyses the reaction (S)-4-amino-5-oxopentanoate = 5-aminolevulinate. The protein operates within porphyrin-containing compound metabolism; protoporphyrin-IX biosynthesis; 5-aminolevulinate from L-glutamyl-tRNA(Glu): step 2/2. In Azoarcus sp. (strain BH72), this protein is Glutamate-1-semialdehyde 2,1-aminomutase.